We begin with the raw amino-acid sequence, 262 residues long: Shikimate dehydrogenase (NADP(+)) (262 aa).

Shikimate-binding positions include Ser14–Ser16 and Thr60. The active-site Proton acceptor is Lys64. Residues Asn85 and Asp100 each coordinate shikimate. NADP(+) contacts are provided by residues Gly121–Ala125, Asn145–Arg150, and Phe203. Tyr205 contacts shikimate. An NADP(+)-binding site is contributed by Gly227.

Belongs to the shikimate dehydrogenase family. In terms of assembly, homodimer.

The enzyme catalyses shikimate + NADP(+) = 3-dehydroshikimate + NADPH + H(+). Its pathway is metabolic intermediate biosynthesis; chorismate biosynthesis; chorismate from D-erythrose 4-phosphate and phosphoenolpyruvate: step 4/7. In terms of biological role, involved in the biosynthesis of the chorismate, which leads to the biosynthesis of aromatic amino acids. Catalyzes the reversible NADPH linked reduction of 3-dehydroshikimate (DHSA) to yield shikimate (SA). The sequence is that of Shikimate dehydrogenase (NADP(+)) from Pyrobaculum aerophilum (strain ATCC 51768 / DSM 7523 / JCM 9630 / CIP 104966 / NBRC 100827 / IM2).